Here is a 441-residue protein sequence, read N- to C-terminus: Malate dehydrogenase [NADP], chloroplastic (441 aa).

Residues 1 to 51 (MAVAELSPSYKTQLKTCQQLSSSLSTRLSDHRKFSLRLLPRPVSVRGGIRC) constitute a chloroplast transit peptide. A disulfide bridge links C75 with C80. Residue 104-110 (GAAGMIS) coordinates NADP(+). Residues R185 and R191 each coordinate substrate. N198 is an NADP(+) binding site. Q205 serves as a coordination point for NAD(+). 222–224 (VGN) is an NADP(+) binding site. Residues N224 and R255 each contribute to the substrate site. Residue H280 is the Proton acceptor of the active site. A disulfide bridge links C416 with C428.

The protein belongs to the LDH/MDH superfamily. MDH type 2 family. As to quaternary structure, homodimer.

The protein localises to the plastid. It is found in the chloroplast. The catalysed reaction is (S)-malate + NADP(+) = oxaloacetate + NADPH + H(+). Its activity is regulated as follows. Chloroplast NADP-MDH is activated upon illumination. In order to be enzymatically active, disulfide bridges on the protein must be reduced by thioredoxin which receives electrons from ferredoxin and the electron transport system of photosynthesis. The chloroplastic, NADP-dependent form is essential for the photosynthesis C4 cycle, which allows plants to circumvent the problem of photorespiration. In C4 plants, NADP-MDH activity acts to convert oxaloacetate to malate in chloroplasts of mesophyll cells for transport to the bundle sheath cells. The protein is Malate dehydrogenase [NADP], chloroplastic (MDH1) of Mesembryanthemum crystallinum (Common ice plant).